We begin with the raw amino-acid sequence, 331 residues long: Ketol-acid reductoisomerase (NADP(+)) (331 aa).

The region spanning 2-182 is the KARI N-terminal Rossmann domain; sequence ARLYYDADAN…GGTRAGILET (181 aa). Residues 25-28, serine 51, serine 53, and 83-86 contribute to the NADP(+) site; these read YGSQ and DEVQ. The active site involves histidine 108. Glycine 134 is a binding site for NADP(+). In terms of domain architecture, KARI C-terminal knotted spans 183–328; it reads TFREETETDL…KDLRAMFSWL (146 aa). Mg(2+) contacts are provided by aspartate 191, glutamate 195, glutamate 227, and glutamate 231. Serine 252 contributes to the substrate binding site.

It belongs to the ketol-acid reductoisomerase family. Mg(2+) serves as cofactor.

It carries out the reaction (2R)-2,3-dihydroxy-3-methylbutanoate + NADP(+) = (2S)-2-acetolactate + NADPH + H(+). The catalysed reaction is (2R,3R)-2,3-dihydroxy-3-methylpentanoate + NADP(+) = (S)-2-ethyl-2-hydroxy-3-oxobutanoate + NADPH + H(+). The protein operates within amino-acid biosynthesis; L-isoleucine biosynthesis; L-isoleucine from 2-oxobutanoate: step 2/4. It functions in the pathway amino-acid biosynthesis; L-valine biosynthesis; L-valine from pyruvate: step 2/4. Functionally, involved in the biosynthesis of branched-chain amino acids (BCAA). Catalyzes an alkyl-migration followed by a ketol-acid reduction of (S)-2-acetolactate (S2AL) to yield (R)-2,3-dihydroxy-isovalerate. In the isomerase reaction, S2AL is rearranged via a Mg-dependent methyl migration to produce 3-hydroxy-3-methyl-2-ketobutyrate (HMKB). In the reductase reaction, this 2-ketoacid undergoes a metal-dependent reduction by NADPH to yield (R)-2,3-dihydroxy-isovalerate. This is Ketol-acid reductoisomerase (NADP(+)) from Cyanothece sp. (strain PCC 7425 / ATCC 29141).